A 370-amino-acid chain; its full sequence is ADP-ribosylhydrolase ARH3 (370 aa).

E47 is a Mg(2+) binding site. T70 is modified (phosphothreonine). The Mg(2+) site is built by T82, D83, and D84. Residue D83 coordinates substrate. Substrate is bound by residues 152–158, H188, L241, and I277; that span reads KGSYGNG. D320, D322, and T323 together coordinate Mg(2+).

It belongs to the ADP-ribosylglycohydrolase family. As to quaternary structure, monomer. Mg(2+) is required as a cofactor. As to expression, ubiquitous.

It is found in the nucleus. It localises to the cytoplasm. Its subcellular location is the chromosome. The protein resides in the mitochondrion matrix. It carries out the reaction [(1''-&gt;2')-ADP-alpha-D-ribose](n) + H2O = [(1''-&gt;2')-ADP-alpha-D-ribose](n-1) + ADP-D-ribose. The catalysed reaction is 1''-O-acetyl-ADP-alpha-D-ribose + H2O = ADP-D-ribose + acetate + H(+). It catalyses the reaction O-(ADP-D-ribosyl)-L-seryl-[protein] + H2O = ADP-D-ribose + L-seryl-[protein]. The enzyme catalyses alpha-NAD(+) + H2O = ADP-D-ribose + nicotinamide + H(+). Its activity is regulated as follows. The protein undergoes a dramatic conformational switch from closed to open states upon substrate-binding, which enables specific substrate recognition for the 1''-O-linkage. The glutamate flap (Glu-47) blocks substrate entrance to Mg(2+) in the unliganded closed state. In presence of substrate, Glu-47 is ejected from the active site: this closed-to-open transition significantly widens the substrate-binding channel and precisely positions the scissile 1''-O-linkage for cleavage while securing tightly 2'- and 3'-hydroxyls of ADP-ribose. Functionally, ADP-ribosylhydrolase that preferentially hydrolyzes the scissile alpha-O-linkage attached to the anomeric C1'' position of ADP-ribose and acts on different substrates, such as proteins ADP-ribosylated on serine and threonine, free poly(ADP-ribose) and O-acetyl-ADP-D-ribose. Specifically acts as a serine mono-ADP-ribosylhydrolase by mediating the removal of mono-ADP-ribose attached to serine residues on proteins, thereby playing a key role in DNA damage response. Serine ADP-ribosylation of proteins constitutes the primary form of ADP-ribosylation of proteins in response to DNA damage. Does not hydrolyze ADP-ribosyl-arginine, -cysteine, -diphthamide, or -asparagine bonds. Also able to degrade protein free poly(ADP-ribose), which is synthesized in response to DNA damage: free poly(ADP-ribose) acts as a potent cell death signal and its degradation by ADPRHL2 protects cells from poly(ADP-ribose)-dependent cell death, a process named parthanatos. Also hydrolyzes free poly(ADP-ribose) in mitochondria. Specifically digests O-acetyl-ADP-D-ribose, a product of deacetylation reactions catalyzed by sirtuins. Specifically degrades 1''-O-acetyl-ADP-D-ribose isomer, rather than 2''-O-acetyl-ADP-D-ribose or 3''-O-acetyl-ADP-D-ribose isomers. This chain is ADP-ribosylhydrolase ARH3 (Adprs), found in Mus musculus (Mouse).